Reading from the N-terminus, the 392-residue chain is Formate-dependent phosphoribosylglycinamide formyltransferase (392 aa).

N(1)-(5-phospho-beta-D-ribosyl)glycinamide contacts are provided by residues 20 to 21 (EL) and Glu-80. ATP contacts are provided by residues Arg-112, Lys-153, 158–163 (SSGKGQ), 193–196 (EEFI), and Glu-201. In terms of domain architecture, ATP-grasp spans 117–306 (RLAAEELGLP…EFELHVRAIL (190 aa)). Glu-265 and Glu-277 together coordinate Mg(2+). Residues Asp-284, Lys-354, and 361–362 (RR) contribute to the N(1)-(5-phospho-beta-D-ribosyl)glycinamide site.

Belongs to the PurK/PurT family. In terms of assembly, homodimer.

The enzyme catalyses N(1)-(5-phospho-beta-D-ribosyl)glycinamide + formate + ATP = N(2)-formyl-N(1)-(5-phospho-beta-D-ribosyl)glycinamide + ADP + phosphate + H(+). It participates in purine metabolism; IMP biosynthesis via de novo pathway; N(2)-formyl-N(1)-(5-phospho-D-ribosyl)glycinamide from N(1)-(5-phospho-D-ribosyl)glycinamide (formate route): step 1/1. Involved in the de novo purine biosynthesis. Catalyzes the transfer of formate to 5-phospho-ribosyl-glycinamide (GAR), producing 5-phospho-ribosyl-N-formylglycinamide (FGAR). Formate is provided by PurU via hydrolysis of 10-formyl-tetrahydrofolate. The protein is Formate-dependent phosphoribosylglycinamide formyltransferase of Geobacter metallireducens (strain ATCC 53774 / DSM 7210 / GS-15).